The sequence spans 454 residues: uncharacterized protein (454 aa).

Residues cysteine 73, cysteine 79, cysteine 82, and cysteine 154 each coordinate [4Fe-4S] cluster. S-adenosyl-L-methionine contacts are provided by glutamine 279, phenylalanine 307, aspartate 328, and aspartate 381. The active-site Nucleophile is the cysteine 408.

This sequence belongs to the class I-like SAM-binding methyltransferase superfamily. RNA M5U methyltransferase family.

This is an uncharacterized protein from Leptospira interrogans serogroup Icterohaemorrhagiae serovar Lai (strain 56601).